The primary structure comprises 366 residues: Lysophosphatidic acid receptor 1-B (366 aa).

The Extracellular segment spans residues 1–52; it reads MTSLSEFVSEPIGMMSQTSAASESQCYYNETIAFFYNRSGKYLDTEWNAVSK. 2 disulfides stabilise this stretch: cysteine 26–cysteine 192 and cysteine 190–cysteine 197. Asparagine 29 and asparagine 37 each carry an N-linked (GlcNAc...) asparagine glycan. Lysine 41 lines the a 1-acyl-sn-glycero-3-phosphate pocket. The chain crosses the membrane as a helical span at residues 53-77; sequence LVMGLGITVCIFIMLANLLVMVAIY. Residues 78–85 are Cytoplasmic-facing; that stretch reads VNRRFHFP. Residues 86–109 form a helical membrane-spanning segment; the sequence is IYYLMANLAAADFFAGLAYFYLMF. Residues 110–123 are Extracellular-facing; sequence NTGPNTRRLTVSTW. Residues 124-146 form a helical membrane-spanning segment; that stretch reads LLRQGLIDTSLTASVANLLAIAI. 126 to 131 contacts a 1-acyl-sn-glycero-3-phosphate; sequence RQGLID. The Cytoplasmic segment spans residues 147–165; it reads ERHITVFRMQLHTRMSNRR. Residues 166 to 186 traverse the membrane as a helical segment; sequence VVVVIVVIWTVAIVMGAIPSV. The Extracellular segment spans residues 187–206; the sequence is GWNCICDLEHCSNMAPLYSD. The helical transmembrane segment at 207 to 227 threads the bilayer; sequence SYLIFWTIFNLVTFVVMVVLY. Residue tryptophan 212 participates in a 1-acyl-sn-glycero-3-phosphate binding. Residues 228-257 are Cytoplasmic-facing; the sequence is AHIFVYVRQRTMRMSRHSSGPRRNRDTMMS. A helical membrane pass occupies residues 258 to 282; the sequence is LLKTVVIVLGAFIVCWTPGLVLLLL. Topologically, residues 283–296 are extracellular; sequence DVCCPQCNILAYEK. Cysteines 286 and 289 form a disulfide. A helical membrane pass occupies residues 297-317; the sequence is FFLLLAEFNSAMNPIIYSYRD. Residues 318–366 are Cytoplasmic-facing; it reads KEMSATFKQILCCQRTENVNGPTEGSDRSASSLNHTILAGVHSNDHSVV.

It belongs to the G-protein coupled receptor 1 family. Expressed at high levels in oocytes and at lower levels in brain and spinal cord. Below detection level in lung, heart, kidney, liver, muscle, stomach, and intestine.

It localises to the cell surface. The protein localises to the cell membrane. Its subcellular location is the endosome. Receptor for lysophosphatidic acid (LPA). Plays a role in the reorganization of the actin cytoskeleton, cell migration, differentiation and proliferation, and thereby contributes to the responses to tissue damage and infectious agents. Activates downstream signaling cascades via the G(i)/G(o), G(12)/G(13), and G(q) families of heteromeric G proteins. Signaling inhibits adenylyl cyclase activity and decreases cellular cAMP levels. Signaling triggers an increase of cytoplasmic Ca(2+) levels. Signaling leads to the activation of phospholipase C (PLC) and the formation of inositol 1,4,5-trisphosphate. Signaling mediates activation of down-stream MAP kinases. Contributes to the regulation of cell shape. Promotes Rho-dependent reorganization of the actin cytoskeleton in neuronal cells and neurite retraction. Promotes the activation of Rho and the formation of actin stress fibers. Promotes formation of lamellipodia at the leading edge of migrating cells via activation of Rac. Through its function as lysophosphatidic acid receptor, plays a role in chemotaxis and cell migration, including responses to injury and wounding. Promotes cell proliferation in response to lysophosphatidic acid. This chain is Lysophosphatidic acid receptor 1-B (lpar1-b), found in Xenopus laevis (African clawed frog).